Reading from the N-terminus, the 163-residue chain is Phosphopantetheine adenylyltransferase (163 aa).

Substrate is bound at residue Thr9. Residues 9-10 and His17 each bind ATP; that span reads TF. Substrate-binding residues include Lys41, Leu73, and Arg87. Residues 88-90, Glu98, and 123-129 contribute to the ATP site; these read GLR and YQFISGT.

Belongs to the bacterial CoaD family. Homohexamer. Mg(2+) serves as cofactor.

The protein localises to the cytoplasm. The catalysed reaction is (R)-4'-phosphopantetheine + ATP + H(+) = 3'-dephospho-CoA + diphosphate. The protein operates within cofactor biosynthesis; coenzyme A biosynthesis; CoA from (R)-pantothenate: step 4/5. Its function is as follows. Reversibly transfers an adenylyl group from ATP to 4'-phosphopantetheine, yielding dephospho-CoA (dPCoA) and pyrophosphate. The chain is Phosphopantetheine adenylyltransferase from Herminiimonas arsenicoxydans.